Here is a 239-residue protein sequence, read N- to C-terminus: Ribosomal RNA large subunit methyltransferase E (239 aa).

The segment at 1–20 (MTKAPIAGNRTGRKLGQRVK) is disordered. Residues 11-20 (TGRKLGQRVK) are compositionally biased toward basic residues. S-adenosyl-L-methionine is bound by residues glycine 81, tryptophan 83, aspartate 104, aspartate 120, and aspartate 144. Lysine 184 serves as the catalytic Proton acceptor.

The protein belongs to the class I-like SAM-binding methyltransferase superfamily. RNA methyltransferase RlmE family.

The protein resides in the cytoplasm. It catalyses the reaction uridine(2552) in 23S rRNA + S-adenosyl-L-methionine = 2'-O-methyluridine(2552) in 23S rRNA + S-adenosyl-L-homocysteine + H(+). Specifically methylates the uridine in position 2552 of 23S rRNA at the 2'-O position of the ribose in the fully assembled 50S ribosomal subunit. This is Ribosomal RNA large subunit methyltransferase E from Rhizobium johnstonii (strain DSM 114642 / LMG 32736 / 3841) (Rhizobium leguminosarum bv. viciae).